A 549-amino-acid polypeptide reads, in one-letter code: Phosphoenolpyruvate carboxykinase (ATP) (549 aa).

250 to 257 is a binding site for ATP; the sequence is GLSGTGKT.

It belongs to the phosphoenolpyruvate carboxykinase (ATP) family. As to quaternary structure, homotetramer.

The enzyme catalyses oxaloacetate + ATP = phosphoenolpyruvate + ADP + CO2. Its pathway is carbohydrate biosynthesis; gluconeogenesis. In Saccharomyces cerevisiae (strain ATCC 204508 / S288c) (Baker's yeast), this protein is Phosphoenolpyruvate carboxykinase (ATP) (PCK1).